A 511-amino-acid polypeptide reads, in one-letter code: Bifunctional purine biosynthesis protein PurH (511 aa).

Positions 1 to 145 constitute an MGS-like domain; the sequence is MKKRALVSVS…KNHKFVSVIV (145 aa).

It belongs to the PurH family.

It carries out the reaction (6R)-10-formyltetrahydrofolate + 5-amino-1-(5-phospho-beta-D-ribosyl)imidazole-4-carboxamide = 5-formamido-1-(5-phospho-D-ribosyl)imidazole-4-carboxamide + (6S)-5,6,7,8-tetrahydrofolate. It catalyses the reaction IMP + H2O = 5-formamido-1-(5-phospho-D-ribosyl)imidazole-4-carboxamide. The protein operates within purine metabolism; IMP biosynthesis via de novo pathway; 5-formamido-1-(5-phospho-D-ribosyl)imidazole-4-carboxamide from 5-amino-1-(5-phospho-D-ribosyl)imidazole-4-carboxamide (10-formyl THF route): step 1/1. It participates in purine metabolism; IMP biosynthesis via de novo pathway; IMP from 5-formamido-1-(5-phospho-D-ribosyl)imidazole-4-carboxamide: step 1/1. This Bacillus cereus (strain Q1) protein is Bifunctional purine biosynthesis protein PurH.